Consider the following 427-residue polypeptide: 12-alpha,13-alpha-dihydroxyfumitremorgin C prenyltransferase (427 aa).

E94 serves as a coordination point for substrate. Dimethylallyl diphosphate-binding residues include R105, K192, Y194, Y268, Q353, Y355, Y419, and Y423.

It belongs to the tryptophan dimethylallyltransferase family.

It catalyses the reaction 12alpha,13alpha-dihydroxyfumitremorgin C + dimethylallyl diphosphate = fumitremorgin B + diphosphate. The protein operates within mycotoxin biosynthesis. In terms of biological role, 12-alpha,13-alpha-dihydroxyfumitremorgin C prenyltransferase; part of the gene cluster that mediates the biosynthesis of fumitremorgins, indole alkaloids that carry not only intriguing chemical structures, but also interesting biological and pharmacological activities. The biosynthesis of fumitremorgin-type alkaloids begins by condensation of the two amino acids L-tryptophan and L-proline to brevianamide F, catalyzed by the non-ribosomal peptide synthetase ftmA. Brevianamide F is then prenylated by the prenyltransferase ftmPT1/ftmB in the presence of dimethylallyl diphosphate, resulting in the formation of tryprostatin B. The three cytochrome P450 monooxygenases, ftmP450-1/ftmC, ftmP450-2/ftmE and ftmP450-3/FtmG, are responsible for the conversion of tryprostatin B to 6-hydroxytryprostatin B, tryprostatin A to fumitremorgin C and fumitremorgin C to 12,13-dihydroxyfumitremorgin C, respectively. The putative methyltransferase ftmMT/ftmD is expected for the conversion of 6-hydroxytryprostatin B to tryprostatin A. FtmPT2/FtmH catalyzes the prenylation of 12,13-dihydroxyfumitre-morgin C in the presence of dimethylallyl diphosphate, resulting in the formation of fumitremorgin B. Fumitremorgin B is further converted to verruculogen by ftmOx1/ftmF via the insertion of an endoperoxide bond between the two prenyl moieties. In some fungal species, verruculogen is further converted to fumitremorgin A, but the enzymes involved in this step have not been identified yet. The protein is 12-alpha,13-alpha-dihydroxyfumitremorgin C prenyltransferase of Aspergillus fumigatus (Neosartorya fumigata).